We begin with the raw amino-acid sequence, 510 residues long: MEEFKGYLQKGGFKQQHFLYPLLFQEYIYVLAHDHGLNVNASTLNEPSEISGYDNKSSLLLVKRLITRIYQQNSLIHSVNDSNQNRFVGHNNNFYYKMISEGFAIVVEIPFSLRLISSLKEKKEIPKSQNLRSIHSIFSFLEDKFAHLNYVSDILIPYPVHLEILVQILQCWIQDVPSLHLLRFLFHEYHNGNNCITPKKSSYGFSKDNPRLYRFLYNSYVVECESIFVFLRKSSSYLQSTSFGTLLERTYFYGKIKHIGVTHSNDFQKTLWLFKDPFMHYVRYQGKSIMASKGTHLLMKKWKSYFVNLWQCHFHFWSQPSRIHINQFSHFSFYFLGYLSSVPINRSSVKSQMLENSFLIDTVTKKFETMVSIIPMIGSLSKAKFCNLSGNPISKPVWADLSDSDIIDRFGRICRNLSHYYSGSSKKQSLYRIKYILRLSCARTLARKHKSTVRAFLQRLGSEFLEEFFMEEEKVLSLMLPRTSYSLHKLYREPIWYLDIIRINDLVNHL.

This sequence belongs to the intron maturase 2 family. MatK subfamily.

Its subcellular location is the plastid. It localises to the chloroplast. In terms of biological role, usually encoded in the trnK tRNA gene intron. Probably assists in splicing its own and other chloroplast group II introns. This chain is Maturase K, found in Spirodela intermedia (Intermediate duckweed).